We begin with the raw amino-acid sequence, 89 residues long: Small ribosomal subunit protein uS17 (89 aa).

The protein belongs to the universal ribosomal protein uS17 family. In terms of assembly, part of the 30S ribosomal subunit.

In terms of biological role, one of the primary rRNA binding proteins, it binds specifically to the 5'-end of 16S ribosomal RNA. This is Small ribosomal subunit protein uS17 from Leptospira borgpetersenii serovar Hardjo-bovis (strain JB197).